The following is a 622-amino-acid chain: Protein FAM234B (622 aa).

The segment at 1 to 68 (MATVLSRALK…EPDSDAEVAE (68 aa)) is disordered. Position 16 is a phosphoserine (serine 16). Threonine 26 carries the post-translational modification Phosphothreonine. Phosphoserine is present on residues serine 30, serine 33, and serine 62. The helical transmembrane segment at 104–124 (TSVFLLTLGISMILVLLCAFL) threads the bilayer.

Belongs to the FAM234 family.

It localises to the membrane. The protein localises to the golgi outpost. The protein resides in the cytoplasm. It is found in the cytoskeleton. Its subcellular location is the microtubule organizing center. This chain is Protein FAM234B, found in Homo sapiens (Human).